The following is a 596-amino-acid chain: Probable translation initiation factor IF-2 (596 aa).

A tr-type G domain is found at 3-220 (IRSPIVSVLG…MLLGLAQEYL (218 aa)). The G1 stretch occupies residues 12–19 (GHVDHGKT). 12–19 (GHVDHGKT) lines the GTP pocket. Residues 37–41 (GITQH) form a G2 region. Positions 76 to 79 (DTPG) are G3. GTP-binding positions include 76 to 80 (DTPGH) and 130 to 133 (NKID). The G4 stretch occupies residues 130–133 (NKID). The tract at residues 198–200 (SAK) is G5.

Belongs to the TRAFAC class translation factor GTPase superfamily. Classic translation factor GTPase family. IF-2 subfamily.

Functionally, function in general translation initiation by promoting the binding of the formylmethionine-tRNA to ribosomes. Seems to function along with eIF-2. The sequence is that of Probable translation initiation factor IF-2 from Methanobrevibacter smithii (strain ATCC 35061 / DSM 861 / OCM 144 / PS).